Consider the following 297-residue polypeptide: Homoserine kinase (297 aa).

ATP is bound at residue 82–92; it reads PLTRGLGSSAS.

Belongs to the GHMP kinase family. Homoserine kinase subfamily.

Its subcellular location is the cytoplasm. It carries out the reaction L-homoserine + ATP = O-phospho-L-homoserine + ADP + H(+). Its pathway is amino-acid biosynthesis; L-threonine biosynthesis; L-threonine from L-aspartate: step 4/5. Catalyzes the ATP-dependent phosphorylation of L-homoserine to L-homoserine phosphate. The polypeptide is Homoserine kinase (Bacillus anthracis (strain CDC 684 / NRRL 3495)).